The primary structure comprises 478 residues: MAGAAAASAAAAAVASGISARPVAPRPSPSRARAPRSVVRAAISVEKGEKAYTVEKSEEIFNAAKELMPGGVNSPVRAFKSVGGQPIVFDSVKGSRMWDVDGNEYIDYVGSWGPAIIGHADDTVNAALIETLKKGTSFGAPCVLENVLAEMVISAVPSIEMVRFVNSGTEACMGALRLVRAFTGREKILKFEGCYHGHADSFLVKAGSGVATLGLPDSPGVPKGATSETLTAPYNDVEAVKKLFEENKGQIAAVFLEPVVGNAGFIPPQPGFLNALRDLTKQDGALLVFDEVMTGFRLAYGGAQEYFGITPDVSTLGKIIGGGLPVGAYGGRKDIMEMVAPAGPMYQAGTLSGNPLAMTAGIHTLKRLMEPGTYDYLDKITGDLVRGVLDAGAKTGHEMCGGHIRGMFGFFFTAGPVHNFGDAKKSDTAKFGRFYRGMLEEGVYLAPSQFEAGFTSLAHTSQDIEKTVEAAAKVLRRI.

The transit peptide at 1–40 (MAGAAAASAAAAAVASGISARPVAPRPSPSRARAPRSVVR) directs the protein to the chloroplast. The tract at residues 15–36 (ASGISARPVAPRPSPSRARAPR) is disordered. Lysine 318 is modified (N6-(pyridoxal phosphate)lysine).

The protein belongs to the class-III pyridoxal-phosphate-dependent aminotransferase family. HemL subfamily. In terms of assembly, homodimer. The cofactor is pyridoxal 5'-phosphate.

It localises to the plastid. Its subcellular location is the chloroplast. The catalysed reaction is (S)-4-amino-5-oxopentanoate = 5-aminolevulinate. It functions in the pathway porphyrin-containing compound metabolism; protoporphyrin-IX biosynthesis; 5-aminolevulinate from L-glutamyl-tRNA(Glu): step 2/2. The protein operates within porphyrin-containing compound metabolism; chlorophyll biosynthesis. This chain is Glutamate-1-semialdehyde 2,1-aminomutase, chloroplastic (GSA), found in Oryza sativa subsp. japonica (Rice).